Reading from the N-terminus, the 809-residue chain is MVDSIHRIASALDTAKVITREAAAVATSKLGESSYTYYSQNINPQQLVTLLNSRNSREVRDAMKRIISIMASDDDSIDVQLYFADVVKNITTNDTKVKRLIHLYLLRFAENDPNLTLLSINSLQKSLSDSNSELRCFALSALSDMKMSSLAPIILHTVKKLVTDPSAMVRGEVALAIIKLYRAGKNDYHEELLDILKELMADTDPKVISCAVLAYKECYADHLELLHGHFRRYCRIIKQLDSWSQSYLIELLIKYCKQYLPKPTVVDKSSEGSPRSCPLPDKYNEIEYPSYEVVNDPDLDLFLQSLNCLIYSSNPTVILSCCNALYQLASPLQMKNTKFIEALVRTVTMTENQGNKEMLLQAIHFLSILDQTLFLPYTKKFYVFPKDPIVASIWKIQILSTLINESNVKEIFKELKYYVASAHFPENVVIMAVKSLSRCGQLSTSWESHVMKWLIDHMESHNLSASVLDAYVNVIRMLVQKNPTKHLRIIFKLADLLTVQTSLADNARAGIVWLFGEIASIEFKICPDVLRRLIQNFSNEGPETRCQILVLSAKLLSYDIDNFKQAQVTGSEENNQNPPYYDFSGSRISQMYNAVLYLAKYDDEFDIRDRARMISSLFDSGKYEIVSLLLQAPKPTARSDDFIVSARLETHTPEIKEFFRMLPWNTEITEVGETGNDIREGAELKDYNKYKKSFSSQSFITNNSARSFTSSSNAKLTGINDGDSNSISGKGNVNTFTSQNGKKYRLQSLDEFFSDIPERKSKPRKIIKVVEESSDEDEDESEESSDDDEYSDSSLGTSSSGTSSSHLEL.

HEAT repeat units follow at residues 37-76 (YYSQ…DDDS), 112-151 (DPNL…SSLA), 153-186 (IILH…AGKN), 187-224 (DYHE…DHLE), and 524-561 (KICP…YDID). Phosphoserine occurs at positions 693, 698, 724, and 726. Disordered regions lie at residues 708–739 (FTSS…FTSQ) and 763–809 (PRKI…HLEL). Residues 722 to 739 (GDSNSISGKGNVNTFTSQ) are compositionally biased toward polar residues. Residues 772–791 (ESSDEDEDESEESSDDDEYS) are compositionally biased toward acidic residues. A compositionally biased stretch (low complexity) spans 792 to 809 (DSSLGTSSSGTSSSHLEL).

Belongs to the adaptor complexes large subunit family. As to quaternary structure, adaptor protein complex 3 (AP-3) is a heterotetramer composed of 2 large adaptins (APL5 and APL6), a medium adaptin (APM3) and a small adaptin (APS3). Post-translationally, pyrophosphorylated by 5-diphosphoinositol pentakisphosphate (5-IP7). Serine pyrophosphorylation is achieved by Mg(2+)-dependent, but enzyme independent transfer of a beta-phosphate from a inositol pyrophosphate to a pre-phosphorylated serine residue.

It is found in the golgi apparatus. The protein localises to the cytoplasmic vesicle. The protein resides in the clathrin-coated vesicle membrane. In terms of biological role, part of the AP-3 complex, an adaptor-related complex which is not clathrin-associated. The complex is associated with the Golgi region as well as more peripheral structures. It facilitates the budding of vesicles from the Golgi membrane and may be directly involved in trafficking to the vacuole. Required for the transport via the ALP pathway, which directs the transport of the cargo proteins PHO8 and VAM3 to the vacuole. The chain is AP-3 complex subunit beta (APL6) from Saccharomyces cerevisiae (strain ATCC 204508 / S288c) (Baker's yeast).